The primary structure comprises 375 residues: G-protein coupled estrogen receptor 1 (375 aa).

Position 1 is an N-acetylmethionine (Met-1). Over 1 to 62 (MDVTSQARGV…QQYVIGLFLS (62 aa)) the chain is Extracellular. N-linked (GlcNAc...) asparagine glycosylation is found at Asn-25, Asn-32, and Asn-44. Residues 63–84 (CLYTIFLFPIGFVGNILILVVN) form a helical membrane-spanning segment. The Cytoplasmic segment spans residues 85–96 (ISFREKMTIPDL). A helical membrane pass occupies residues 97–120 (YFINLAVADLILVADSLIEVFNLH). Residues 121–132 (ERYYDIAVLCTF) lie on the Extracellular side of the membrane. Cysteines 130 and 207 form a disulfide. Residues 133–153 (MSLFLQVNMYSSVFFLTWMSF) traverse the membrane as a helical segment. Residues 154–175 (DRYIALARAMRCSLFRTKHHAR) lie on the Cytoplasmic side of the membrane. A helical transmembrane segment spans residues 176-194 (LSCGLIWMASVSATLVPFT). At 195-220 (AVHLQHTDEACFCFADVREVQWLEVT) the chain is on the extracellular side. A helical membrane pass occupies residues 221-236 (LGFIVPFAIIGLCYSL). The Cytoplasmic segment spans residues 237 to 259 (IVRVLVRAHRHRGLRPRRQKALR). The chain crosses the membrane as a helical span at residues 260–280 (MILAVVLVFFVCWLPENVFIS). Over 281-306 (VHLLQRTQPGAAPCKQSFRHAHPLTG) the chain is Extracellular. A helical transmembrane segment spans residues 307 to 327 (HIVNLAAFSNSCLNPLIYSFL). The Cytoplasmic segment spans residues 328–375 (GETFRDKLRLYIEQKTNLPALNRFCHAALKAVIPDSTEQSDVRFSSAV).

Belongs to the G-protein coupled receptor 1 family. Homodimer. Heterodimer; heterodimerizes with other G-protein-coupled receptor (GPCRs) like CRHR1, HTR1A and PAQR8. Interacts (via C-terminus tail motif) with DLG4 (via N-terminus tandem pair of PDZ domains); the interaction is direct and induces the increase of GPER1 protein levels residing at the plasma membrane surface in a estradiol-independent manner. Interacts with RAMP3; the interaction confers proper subcellular localization and function in cardioprotection. Interacts with KRT7 and KRT8. Interacts with EGFR; the interaction increases after agonist-induced stimulation in cancer-associated fibroblasts (CAF). Interacts with EGFR and ESR1. In terms of processing, ubiquitinated; ubiquitination occurs at the plasma membrane and leads to proteasome-mediated degradation. Glycosylated. In terms of tissue distribution, expressed in placenta, endothelial and epithelial cells, non laboring and laboring term myometrium, fibroblasts and cancer-associated fibroblasts (CAF), prostate cancer cells and invasive adenocarcinoma (at protein level). Ubiquitously expressed, but is most abundant in placenta. In brain regions, expressed as a 2.8 kb transcript in basal forebrain, frontal cortex, thalamus, hippocampus, caudate and putamen.

It localises to the nucleus. The protein localises to the cytoplasm. It is found in the perinuclear region. Its subcellular location is the cytoskeleton. The protein resides in the cell membrane. It localises to the basolateral cell membrane. The protein localises to the cytoplasmic vesicle membrane. It is found in the early endosome. Its subcellular location is the recycling endosome. The protein resides in the golgi apparatus membrane. It localises to the golgi apparatus. The protein localises to the trans-Golgi network. It is found in the endoplasmic reticulum membrane. Its subcellular location is the cell projection. The protein resides in the dendrite. It localises to the dendritic spine membrane. The protein localises to the axon. It is found in the postsynaptic density. Its subcellular location is the mitochondrion membrane. Functionally, G-protein coupled estrogen receptor that binds to 17-beta-estradiol (E2) with high affinity, leading to rapid and transient activation of numerous intracellular signaling pathways. Stimulates cAMP production, calcium mobilization and tyrosine kinase Src inducing the release of heparin-bound epidermal growth factor (HB-EGF) and subsequent transactivation of the epidermal growth factor receptor (EGFR), activating downstream signaling pathways such as PI3K/Akt and ERK/MAPK. Mediates pleiotropic functions among others in the cardiovascular, endocrine, reproductive, immune and central nervous systems. Has a role in cardioprotection by reducing cardiac hypertrophy and perivascular fibrosis in a RAMP3-dependent manner. Regulates arterial blood pressure by stimulating vasodilation and reducing vascular smooth muscle and microvascular endothelial cell proliferation. Plays a role in blood glucose homeostasis contributing to the insulin secretion response by pancreatic beta cells. Triggers mitochondrial apoptosis during pachytene spermatocyte differentiation. Stimulates uterine epithelial cell proliferation. Enhances uterine contractility in response to oxytocin. Contributes to thymic atrophy by inducing apoptosis. Attenuates TNF-mediated endothelial expression of leukocyte adhesion molecules. Promotes neuritogenesis in developing hippocampal neurons. Plays a role in acute neuroprotection against NMDA-induced excitotoxic neuronal death. Increases firing activity and intracellular calcium oscillations in luteinizing hormone-releasing hormone (LHRH) neurons. Inhibits early osteoblast proliferation at growth plate during skeletal development. Inhibits mature adipocyte differentiation and lipid accumulation. Involved in the recruitment of beta-arrestin 2 ARRB2 at the plasma membrane in epithelial cells. Also functions as a receptor for aldosterone mediating rapid regulation of vascular contractibility through the PI3K/ERK signaling pathway. Involved in cancer progression regulation. Stimulates cancer-associated fibroblast (CAF) proliferation by a rapid genomic response through the EGFR/ERK transduction pathway. Associated with EGFR, may act as a transcription factor activating growth regulatory genes (c-fos, cyclin D1). Promotes integrin alpha-5/beta-1 and fibronectin (FN) matrix assembly in breast cancer cells. This is G-protein coupled estrogen receptor 1 from Homo sapiens (Human).